We begin with the raw amino-acid sequence, 417 residues long: Tyrosine--tRNA ligase (417 aa).

Tyrosine 35 is a binding site for L-tyrosine. The short motif at 40–49 is the 'HIGH' region element; it reads ATAGSLTVGH. Residues tyrosine 165 and glutamine 169 each coordinate L-tyrosine. The short motif at 229–233 is the 'KMSKS' region element; it reads KFGKS. Lysine 232 serves as a coordination point for ATP. An S4 RNA-binding domain is found at 350–416; it reads ISLLEALVFT…GKRFNALIIF (67 aa).

Belongs to the class-I aminoacyl-tRNA synthetase family. TyrS type 1 subfamily. As to quaternary structure, homodimer.

It localises to the cytoplasm. It catalyses the reaction tRNA(Tyr) + L-tyrosine + ATP = L-tyrosyl-tRNA(Tyr) + AMP + diphosphate + H(+). In terms of biological role, catalyzes the attachment of tyrosine to tRNA(Tyr) in a two-step reaction: tyrosine is first activated by ATP to form Tyr-AMP and then transferred to the acceptor end of tRNA(Tyr). The polypeptide is Tyrosine--tRNA ligase (Phytoplasma mali (strain AT)).